The following is a 119-amino-acid chain: Large ribosomal subunit protein bL20 (119 aa).

The protein belongs to the bacterial ribosomal protein bL20 family.

In terms of biological role, binds directly to 23S ribosomal RNA and is necessary for the in vitro assembly process of the 50S ribosomal subunit. It is not involved in the protein synthesizing functions of that subunit. This Shouchella clausii (strain KSM-K16) (Alkalihalobacillus clausii) protein is Large ribosomal subunit protein bL20.